The primary structure comprises 334 residues: Dihydroorotate dehydrogenase (quinone) (334 aa).

Residues 59 to 63 (AGLDK) and Thr83 each bind FMN. Lys63 contributes to the substrate binding site. 108–112 (NRMGF) contacts substrate. Residues Asn136 and Asn169 each coordinate FMN. Asn169 is a binding site for substrate. The Nucleophile role is filled by Ser172. Asn174 contacts substrate. FMN is bound by residues Lys214 and Thr242. 243-244 (NT) is a binding site for substrate. FMN is bound by residues Gly265, Gly294, and 315–316 (YS).

This sequence belongs to the dihydroorotate dehydrogenase family. Type 2 subfamily. In terms of assembly, monomer. The cofactor is FMN.

It is found in the cell membrane. The enzyme catalyses (S)-dihydroorotate + a quinone = orotate + a quinol. Its pathway is pyrimidine metabolism; UMP biosynthesis via de novo pathway; orotate from (S)-dihydroorotate (quinone route): step 1/1. Catalyzes the conversion of dihydroorotate to orotate with quinone as electron acceptor. This is Dihydroorotate dehydrogenase (quinone) from Acinetobacter baumannii (strain SDF).